The primary structure comprises 948 residues: Protocadherin alpha-10 (948 aa).

Positions 1-28 are cleaved as a signal peptide; that stretch reads MVSRCSCLGVQCLLLSLLLLAAWEVGSG. Cadherin domains follow at residues 29 to 132, 133 to 241, 242 to 349, 350 to 454, 455 to 564, and 587 to 689; these read QLHY…PPRF, SVTE…APIF, DRPV…SPEV, IVTS…APAF, AQPE…APAL, and GHVV…APEV. Topologically, residues 29-695 are extracellular; it reads QLHYSVYEEA…APEVALVDVN (667 aa). Residues Asn-256 and Asn-264 are each glycosylated (N-linked (GlcNAc...) asparagine). An N-linked (GlcNAc...) asparagine glycan is attached at Asn-547. Residues 696–716 traverse the membrane as a helical segment; the sequence is VYLIIAICAVSSLLVLTLLLY. Residues 717–948 lie on the Cytoplasmic side of the membrane; that stretch reads TALRCSAAPT…GNSTTDNSDQ (232 aa). 6 PXXP repeats span residues 732–735, 772–775, 797–800, 830–833, 871–874, and 889–892; these read PVKP, PSLP, PRQP, PGGP, PGNP, and PGSP. Residues 732 to 892 are 6 X 4 AA repeats of P-X-X-P; that stretch reads PVKPTLVCSS…PDKFIIPGSP (161 aa). Disordered regions lie at residues 783–804 and 827–948; these read DGED…NPDW and RAGP…NSDQ. Residues 907–921 are compositionally biased toward basic and acidic residues; the sequence is DKSDFITFGKKEETK.

It is found in the cell membrane. Its function is as follows. Potential calcium-dependent cell-adhesion protein. May be involved in the establishment and maintenance of specific neuronal connections in the brain. The sequence is that of Protocadherin alpha-10 (PCDHA10) from Pan troglodytes (Chimpanzee).